A 425-amino-acid chain; its full sequence is Enolase (425 aa).

Q162 contributes to the (2R)-2-phosphoglycerate binding site. Residue E204 is the Proton donor of the active site. Mg(2+) contacts are provided by D241, E288, and D315. (2R)-2-phosphoglycerate-binding residues include K340, R369, S370, and K391. The active-site Proton acceptor is K340.

It belongs to the enolase family. It depends on Mg(2+) as a cofactor.

Its subcellular location is the cytoplasm. The protein resides in the secreted. The protein localises to the cell surface. The enzyme catalyses (2R)-2-phosphoglycerate = phosphoenolpyruvate + H2O. It participates in carbohydrate degradation; glycolysis; pyruvate from D-glyceraldehyde 3-phosphate: step 4/5. Its function is as follows. Catalyzes the reversible conversion of 2-phosphoglycerate (2-PG) into phosphoenolpyruvate (PEP). It is essential for the degradation of carbohydrates via glycolysis. This is Enolase from Porphyromonas gingivalis (strain ATCC 33277 / DSM 20709 / CIP 103683 / JCM 12257 / NCTC 11834 / 2561).